Here is an 824-residue protein sequence, read N- to C-terminus: Glycogen phosphorylase (824 aa).

N6-(pyridoxal phosphate)lysine is present on Lys667.

It belongs to the glycogen phosphorylase family. Pyridoxal 5'-phosphate is required as a cofactor.

The catalysed reaction is [(1-&gt;4)-alpha-D-glucosyl](n) + phosphate = [(1-&gt;4)-alpha-D-glucosyl](n-1) + alpha-D-glucose 1-phosphate. Phosphorylase is an important allosteric enzyme in carbohydrate metabolism. Enzymes from different sources differ in their regulatory mechanisms and in their natural substrates. However, all known phosphorylases share catalytic and structural properties. This is Glycogen phosphorylase (glgP) from Chlamydia pneumoniae (Chlamydophila pneumoniae).